A 300-amino-acid chain; its full sequence is MEKTKEKAERILLEPYKYLLQLPGKQVRTKLSQAFNHWLKVPEDKLQIIIEVTEMLHNASLLIDDIEDSSKLRRGFPVAHSIYGVPSVINSANYVYFLGLEKVLTLDHPDAVKLFTRQLLELHQGQGLDIYWRDTYTCPTEEEYKAMVLQKTGGLFGLAVGLMQLFSDYKEDLKPLLDTLGLFFQIRDDYANLHSKEYSENKSFCEDLTEGKFSFPTIHAIWSRPESTQVQNILRQRTENIDIKKYCVQYLEDVGSFEYTRYTLRELEAKAYKQIEACGGNPSLVALVKHLSKMFTEENE.

Position 1 is an N-acetylmethionine (M1). Isopentenyl diphosphate contacts are provided by K25, R28, and H57. Residues D64 and D68 each contribute to the Mg(2+) site. R73 contacts dimethylallyl diphosphate. Position 74 (R74) interacts with isopentenyl diphosphate. Residues K151, T152, Q185, K202, and K212 each coordinate dimethylallyl diphosphate.

This sequence belongs to the FPP/GGPP synthase family. Homohexamer; trimer of homodimers. Requires Mg(2+) as cofactor.

The protein resides in the cytoplasm. It localises to the perinuclear region. It is found in the myofibril. Its subcellular location is the sarcomere. The protein localises to the z line. The catalysed reaction is isopentenyl diphosphate + dimethylallyl diphosphate = (2E)-geranyl diphosphate + diphosphate. It catalyses the reaction isopentenyl diphosphate + (2E)-geranyl diphosphate = (2E,6E)-farnesyl diphosphate + diphosphate. It carries out the reaction isopentenyl diphosphate + (2E,6E)-farnesyl diphosphate = (2E,6E,10E)-geranylgeranyl diphosphate + diphosphate. It functions in the pathway isoprenoid biosynthesis; farnesyl diphosphate biosynthesis; farnesyl diphosphate from geranyl diphosphate and isopentenyl diphosphate: step 1/1. The protein operates within isoprenoid biosynthesis; geranyl diphosphate biosynthesis; geranyl diphosphate from dimethylallyl diphosphate and isopentenyl diphosphate: step 1/1. It participates in isoprenoid biosynthesis; geranylgeranyl diphosphate biosynthesis; geranylgeranyl diphosphate from farnesyl diphosphate and isopentenyl diphosphate: step 1/1. Its function is as follows. Catalyzes the trans-addition of the three molecules of IPP onto DMAPP to form geranylgeranyl pyrophosphate, an important precursor of carotenoids and geranylated proteins. The protein is Geranylgeranyl pyrophosphate synthase (Ggps1) of Rattus norvegicus (Rat).